The following is a 461-amino-acid chain: Pup--protein ligase (461 aa).

Glutamate 9 is a binding site for Mg(2+). Arginine 53 is a binding site for ATP. Tyrosine 55 contributes to the Mg(2+) binding site. Catalysis depends on aspartate 57, which acts as the Proton acceptor. Position 63 (glutamate 63) interacts with Mg(2+). ATP is bound by residues threonine 66 and tryptophan 420.

It belongs to the Pup ligase/Pup deamidase family. Pup-conjugating enzyme subfamily.

It carries out the reaction ATP + [prokaryotic ubiquitin-like protein]-L-glutamate + [protein]-L-lysine = ADP + phosphate + N(6)-([prokaryotic ubiquitin-like protein]-gamma-L-glutamyl)-[protein]-L-lysine.. It participates in protein degradation; proteasomal Pup-dependent pathway. The protein operates within protein modification; protein pupylation. In terms of biological role, catalyzes the covalent attachment of the prokaryotic ubiquitin-like protein modifier Pup to the proteasomal substrate proteins, thereby targeting them for proteasomal degradation. This tagging system is termed pupylation. The ligation reaction involves the side-chain carboxylate of the C-terminal glutamate of Pup and the side-chain amino group of a substrate lysine. This is Pup--protein ligase from Renibacterium salmoninarum (strain ATCC 33209 / DSM 20767 / JCM 11484 / NBRC 15589 / NCIMB 2235).